Here is a 1085-residue protein sequence, read N- to C-terminus: DNA polymerase (1085 aa).

Positions 1059–1085 are disordered; it reads YDQKRPNPRPQEPLLENPFWDDSSQTA.

Belongs to the DNA polymerase type-B family. In terms of assembly, heterodimer with the terminal protein; this heterodimer binds to bp 9 to 18 of the genome. Forms a complex with viral pTP, DBP and hosts NFIA and POU2F1/OCT1 for initiation of replication.

It is found in the host nucleus. It carries out the reaction DNA(n) + a 2'-deoxyribonucleoside 5'-triphosphate = DNA(n+1) + diphosphate. Its function is as follows. Eukaryotic-type DNA polymerase involved in viral genomic replication. DNA synthesis is protein primed, and acts in a strand displacement replication. In terms of biological role, eukaryotic-type DNA polymerase involved in viral genomic replication. DNA synthesis is protein primed, and acts in a strand displacement replication. Assembles in complex with viral pTP, DBP, host NFIA and host POU2F1/OCT1 on viral origin of replication. The polymerase covalently transfers dCMP onto pTP, thereby initiating complementary strand synthesis. The polypeptide is DNA polymerase (Pantherophis guttatus (Corn snake)).